Reading from the N-terminus, the 421-residue chain is O-acetyl-L-homoserine sulfhydrylase 1 (421 aa).

Residue K206 is modified to N6-(pyridoxal phosphate)lysine.

It belongs to the trans-sulfuration enzymes family. Homotetramer. Pyridoxal 5'-phosphate serves as cofactor.

The enzyme catalyses O-acetyl-L-homoserine + hydrogen sulfide = L-homocysteine + acetate. It participates in amino-acid biosynthesis; L-methionine biosynthesis via de novo pathway; L-homocysteine from O-acetyl-L-homoserine: step 1/1. Inhibited by the carbonyl reagents hydroxylamine and phenylhydrazine. Also inhibited by methionine and propargylglycine. Functionally, catalyzes the conversion of O-acetyl-L-homoserine (OAH) into homocysteine in the methionine biosynthesis pathway. Has weak activity with O-acetyl-L-serine, O-phospho-L-serine, L-serine, O-succinyl-L-homoserine and L-homoserine. Shows low CTT beta-lyase activity and very low CTT gamma-synthase activity. The protein is O-acetyl-L-homoserine sulfhydrylase 1 of Thermus thermophilus (strain ATCC 27634 / DSM 579 / HB8).